Consider the following 397-residue polypeptide: Succinyl-diaminopimelate desuccinylase (397 aa).

His-73 is a binding site for Zn(2+). Asp-75 is a catalytic residue. Asp-106 contacts Zn(2+). Glu-140 functions as the Proton acceptor in the catalytic mechanism. Glu-141, Glu-169, and His-366 together coordinate Zn(2+).

It belongs to the peptidase M20A family. DapE subfamily. In terms of assembly, homodimer. Requires Zn(2+) as cofactor. Co(2+) serves as cofactor.

The enzyme catalyses N-succinyl-(2S,6S)-2,6-diaminopimelate + H2O = (2S,6S)-2,6-diaminopimelate + succinate. It functions in the pathway amino-acid biosynthesis; L-lysine biosynthesis via DAP pathway; LL-2,6-diaminopimelate from (S)-tetrahydrodipicolinate (succinylase route): step 3/3. Functionally, catalyzes the hydrolysis of N-succinyl-L,L-diaminopimelic acid (SDAP), forming succinate and LL-2,6-diaminopimelate (DAP), an intermediate involved in the bacterial biosynthesis of lysine and meso-diaminopimelic acid, an essential component of bacterial cell walls. This is Succinyl-diaminopimelate desuccinylase from Rhizobium rhizogenes (strain K84 / ATCC BAA-868) (Agrobacterium radiobacter).